The chain runs to 140 residues: uncharacterized protein (140 aa).

Helical transmembrane passes span 4-21 (ILKF…YLFG) and 26-48 (LVKV…SGYL).

The protein belongs to the bacteriophage holin family. Cp-1 holin subfamily.

It is found in the cell membrane. This is an uncharacterized protein from Listeria monocytogenes serovar 1/2a (strain ATCC BAA-679 / EGD-e).